A 962-amino-acid polypeptide reads, in one-letter code: Protein kinase ORF73 (962 aa).

2 disordered regions span residues methionine 1–proline 28 and serine 62–threonine 152. A compositionally biased stretch (acidic residues) spans aspartate 81–asparagine 90. A compositionally biased stretch (polar residues) spans tyrosine 143–threonine 152. The Protein kinase domain maps to leucine 301–tyrosine 595. ATP contacts are provided by residues leucine 307–valine 315 and lysine 324. Aspartate 434 acts as the Proton acceptor in catalysis.

The protein belongs to the protein kinase superfamily. Ser/Thr protein kinase family.

The enzyme catalyses L-seryl-[protein] + ATP = O-phospho-L-seryl-[protein] + ADP + H(+). It carries out the reaction L-threonyl-[protein] + ATP = O-phospho-L-threonyl-[protein] + ADP + H(+). In Ictaluridae (bullhead catfishes), this protein is Protein kinase ORF73 (ORF73).